The following is a 927-amino-acid chain: 2-oxoadipate dehydrogenase complex component E1 (927 aa).

The protein belongs to the alpha-ketoglutarate dehydrogenase family. The 2-oxoadipate dehydrogenase complex is composed of OADH (2-oxoadipate dehydrogenase; E1a), DLST (dihydrolipoamide succinyltransferase; E2) and DLD (dihydrolipoamide dehydrogenase; E3). E1a functional unit is a dimer. Thiamine diphosphate serves as cofactor.

The protein localises to the mitochondrion. The catalysed reaction is N(6)-[(R)-lipoyl]-L-lysyl-[protein] + 2-oxoadipate + H(+) = N(6)-[(R)-S(8)-glutaryldihydrolipoyl]-L-lysyl-[protein] + CO2. Its pathway is amino-acid degradation. Functionally, 2-oxoadipate dehydrogenase (E1a) component of the 2-oxoadipate dehydrogenase complex (OADHC). Participates in the first step, rate limiting for the overall conversion of 2-oxoadipate (alpha-ketoadipate) to glutaryl-CoA and CO(2) catalyzed by the whole OADHC. Catalyzes the irreversible decarboxylation of 2-oxoadipate via the thiamine diphosphate (ThDP) cofactor and subsequent transfer of the decarboxylated acyl intermediate on an oxidized dihydrolipoyl group that is covalently amidated to the E2 enzyme (dihydrolipoyllysine-residue succinyltransferase or DLST). Can catalyze the decarboxylation of 2-oxoglutarate in vitro, but at a much lower rate than 2-oxoadipate. Responsible for the last step of L-lysine, L-hydroxylysine and L-tryptophan catabolism with the common product being 2-oxoadipate. This chain is 2-oxoadipate dehydrogenase complex component E1 (dhtkd1), found in Xenopus laevis (African clawed frog).